Here is a 309-residue protein sequence, read N- to C-terminus: 2-phospho-L-lactate transferase (309 aa).

7,8-didemethyl-8-hydroxy-5-deazariboflavin contacts are provided by Asp-50 and Arg-89.

The protein belongs to the CofD family. Homodimer. Mg(2+) is required as a cofactor.

It carries out the reaction (2S)-lactyl-2-diphospho-5'-guanosine + 7,8-didemethyl-8-hydroxy-5-deazariboflavin = oxidized coenzyme F420-0 + GMP + H(+). The protein operates within cofactor biosynthesis; coenzyme F420 biosynthesis. Its function is as follows. Catalyzes the transfer of the 2-phospholactate moiety from (2S)-lactyl-2-diphospho-5'-guanosine to 7,8-didemethyl-8-hydroxy-5-deazariboflavin (FO) with the formation of oxidized coenzyme F420-0 and GMP. In Methanococcus maripaludis (strain DSM 14266 / JCM 13030 / NBRC 101832 / S2 / LL), this protein is 2-phospho-L-lactate transferase.